The chain runs to 121 residues: Small ribosomal subunit protein uS11c (121 aa).

It belongs to the universal ribosomal protein uS11 family. In terms of assembly, part of the 30S ribosomal subunit.

It is found in the plastid. Its subcellular location is the chloroplast. This is Small ribosomal subunit protein uS11c from Cyanidioschyzon merolae (strain NIES-3377 / 10D) (Unicellular red alga).